A 283-amino-acid polypeptide reads, in one-letter code: Probable 3-deoxy-manno-octulosonic acid transferase (283 aa).

It is found in the cytoplasm. The enzyme catalyses an alpha-Kdo-(2-&gt;4)-alpha-Kdo-(2-&gt;6)-lipid IVA + CMP-3-deoxy-beta-D-manno-octulosonate = an alpha-Kdo-(2-&gt;4)-alpha-Kdo-(2-&gt;4)-alpha-Kdo-(2-&gt;6)-lipid IVA + CMP + H(+). It catalyses the reaction alpha-Kdo-(2-&gt;4)-alpha-Kdo-(2-&gt;6)-lipid IVA (E. coli) + CMP-3-deoxy-beta-D-manno-octulosonate = alpha-Kdo-(2-&gt;4)-alpha-Kdo-(2-&gt;4)-alpha-Kdo-(2-&gt;6)-lipid IVA + CMP + H(+). It functions in the pathway bacterial outer membrane biogenesis; LPS core biosynthesis. The protein operates within bacterial outer membrane biogenesis; LOS core biosynthesis. Its function is as follows. Involved in the biosynthesis of the core oligosaccharide region of lipopolysaccharide (LPS). Required for the addition of 3-deoxy-D-manno-oct-2-ulosonic acid III (KdoIII) to the KdoII residue of the inner lipopolysaccharide core. May also play a role in a lipooligosaccharide (LOS) biosynthesis pathway. The protein is Probable 3-deoxy-manno-octulosonic acid transferase of Escherichia coli (strain K12).